Consider the following 323-residue polypeptide: MIQPDPTVLALALLLDLCLGDPRWLPHPVVMIGRLITFLETLLRRCMANERIAGVLLLALTVTSAASVTWLMVWGSARLHALAGLMVAALLSSTCLAARSLQRESCLVADALDAGDIASARVKLSYIVGRDTVDLDEEEIWRALIETVAENTTDGIIAPLFWLALGGPVAGMAFKAVSTLDSMVGYKNERYLRLGWASARMDDLVNYIPARLTALLMVMVAPLIGLSQANAASIALRDRLNHPSPNSAHPESAAAGALGIRLGGPSTYGGLLSVKQFIGDPLRSIDGQAYRGMIRLMYATTLAMAVISLATAALLRGIHVTQL.

The next 5 helical transmembrane spans lie at 52–72, 73–93, 154–174, 214–234, and 294–314; these read IAGVLLLALTVTSAASVTWLM, VWGSARLHALAGLMVAALLSS, DGIIAPLFWLALGGPVAGMAF, ALLMVMVAPLIGLSQANAASI, and IRLMYATTLAMAVISLATAAL.

The protein belongs to the CobD/CbiB family.

Its subcellular location is the cell membrane. It functions in the pathway cofactor biosynthesis; adenosylcobalamin biosynthesis. Functionally, converts cobyric acid to cobinamide by the addition of aminopropanol on the F carboxylic group. The protein is Cobalamin biosynthesis protein CobD of Pelobacter propionicus (strain DSM 2379 / NBRC 103807 / OttBd1).